A 95-amino-acid chain; its full sequence is Acylphosphatase (95 aa).

One can recognise an Acylphosphatase-like domain in the interval 7–94; the sequence is AALVRITGRV…EAPAGFRITR (88 aa). Catalysis depends on residues arginine 22 and asparagine 40. Low complexity predominate over residues 76 to 88; that stretch reads VASEEASSAEAPA. The tract at residues 76 to 95 is disordered; it reads VASEEASSAEAPAGFRITRG.

It belongs to the acylphosphatase family.

The catalysed reaction is an acyl phosphate + H2O = a carboxylate + phosphate + H(+). This chain is Acylphosphatase (acyP), found in Rhizobium meliloti (strain 1021) (Ensifer meliloti).